We begin with the raw amino-acid sequence, 529 residues long: Putative amidohydrolase YtcJ (529 aa).

Belongs to the metallo-dependent hydrolases superfamily.

This Bacillus subtilis (strain 168) protein is Putative amidohydrolase YtcJ (ytcJ).